The following is a 452-amino-acid chain: CCA-adding enzyme (452 aa).

Residues serine 54 and arginine 57 each coordinate ATP. The CTP site is built by serine 54 and arginine 57. Residues aspartate 66, aspartate 68, and aspartate 117 each contribute to the Mg(2+) site. ATP contacts are provided by histidine 140, lysine 160, and tyrosine 169. CTP-binding residues include histidine 140, lysine 160, and tyrosine 169.

This sequence belongs to the tRNA nucleotidyltransferase/poly(A) polymerase family. Archaeal CCA-adding enzyme subfamily. In terms of assembly, homodimer. Mg(2+) is required as a cofactor.

The catalysed reaction is a tRNA precursor + 2 CTP + ATP = a tRNA with a 3' CCA end + 3 diphosphate. The enzyme catalyses a tRNA with a 3' CCA end + 2 CTP + ATP = a tRNA with a 3' CCACCA end + 3 diphosphate. Its function is as follows. Catalyzes the addition and repair of the essential 3'-terminal CCA sequence in tRNAs without using a nucleic acid template. Adds these three nucleotides in the order of C, C, and A to the tRNA nucleotide-73, using CTP and ATP as substrates and producing inorganic pyrophosphate. tRNA 3'-terminal CCA addition is required both for tRNA processing and repair. Also involved in tRNA surveillance by mediating tandem CCA addition to generate a CCACCA at the 3' terminus of unstable tRNAs. While stable tRNAs receive only 3'-terminal CCA, unstable tRNAs are marked with CCACCA and rapidly degraded. This chain is CCA-adding enzyme, found in Halobacterium salinarum (strain ATCC 29341 / DSM 671 / R1).